The primary structure comprises 86 residues: Toxin 3FTx-Dis4 (86 aa).

An N-terminal signal peptide occupies residues 1 to 19 (MKTLLLSLVMVGFMYLVSG). Cystine bridges form between Cys24/Cys45, Cys38/Cys63, and Cys79/Cys84.

This sequence belongs to the three-finger toxin family. Ancestral subfamily. In terms of tissue distribution, expressed by the venom gland.

The protein resides in the secreted. This chain is Toxin 3FTx-Dis4, found in Dispholidus typus (Boomslang).